Consider the following 149-residue polypeptide: Transcriptional repressor NrdR (149 aa).

The segment at 3–34 (CPFCSAVDTKVIDSRLVGEGSSVRRRRQCLVC) is a zinc-finger region. The 91-residue stretch at 49–139 (PRVVKSNDVR…VYRSFEDIKE (91 aa)) folds into the ATP-cone domain.

This sequence belongs to the NrdR family. Requires Zn(2+) as cofactor.

In terms of biological role, negatively regulates transcription of bacterial ribonucleotide reductase nrd genes and operons by binding to NrdR-boxes. The polypeptide is Transcriptional repressor NrdR (Enterobacter sp. (strain 638)).